The primary structure comprises 300 residues: Sporulation protein SPS18 (300 aa).

One can recognise an Arf-GAP domain in the interval 11–130 (ENRKRLLRAK…LANEVRSNDI (120 aa)). The C4-type zinc finger occupies 28-51 (CFECKSVNPQFVSCSFGIFICVNC).

The sequence is that of Sporulation protein SPS18 (SPS18) from Saccharomyces cerevisiae (strain ATCC 204508 / S288c) (Baker's yeast).